We begin with the raw amino-acid sequence, 312 residues long: Gamma-soluble NSF attachment protein (312 aa).

Residues Lys-281–Cys-312 form a disordered region. Residues Ala-285–Ala-299 show a composition bias toward low complexity. The segment covering Ala-300 to Cys-312 has biased composition (acidic residues).

Belongs to the SNAP family. In terms of assembly, interacts with RAB11FIP5. Interacts with VTI1A.

It localises to the membrane. Its subcellular location is the golgi apparatus. Required for vesicular transport between the endoplasmic reticulum and the Golgi apparatus. This is Gamma-soluble NSF attachment protein from Bos taurus (Bovine).